Here is a 405-residue protein sequence, read N- to C-terminus: Transposase from transposon Tn916 (405 aa).

The region spanning 79–163 (GKKMTLCQLY…SLKASFYIAI (85 aa)) is the Core-binding (CB) domain. Positions 186–392 (VPKTVLTEEQ…TFDSAMAEMK (207 aa)) constitute a Tyr recombinase domain. Catalysis depends on residues Arg225, Lys264, His343, Arg346, and His369. The active-site O-(3'-phospho-DNA)-tyrosine intermediate is the Tyr379.

It belongs to the 'phage' integrase family.

This chain is Transposase from transposon Tn916 (Int-Tn), found in Enterococcus faecalis (Streptococcus faecalis).